A 657-amino-acid chain; its full sequence is Outer dense fiber protein 2 (657 aa).

Phosphoserine occurs at positions 73 and 74. T92 bears the Phosphothreonine mark. At S95 the chain carries Phosphoserine; by TSSK4. A phosphoserine mark is found at S106 and S109. T110 carries the phosphothreonine modification. A phosphoserine mark is found at S115 and S129. Residue K138 forms a Glycyl lysine isopeptide (Lys-Gly) (interchain with G-Cter in SUMO2) linkage. Residue S139 is modified to Phosphoserine. Coiled coils occupy residues 144–423 and 461–635; these read QKGE…AEQL and EIIV…SDLR. T231 is modified (phosphothreonine). 2 positions are modified to phosphoserine: S261 and S632.

Belongs to the ODF2 family. Self-associates. Associates with microtubules and forms a fibrillar structure partially linked to the microtubule network. Interacts via its C-terminus with PLK1. Interacts with ODF1. Interacts with MARK4; the interaction is required for localization of ODF2 to centrioles. Interacts with TSSK4. Interacts with AKNA. Interacts with CFAP58. Interacts with BBOF1. Interacts with CCDC38. Interacts with CCDC42. In terms of processing, tyrosine phosphorylated. Phosphorylated on Ser-95 by TSSK4.

The protein localises to the cytoplasm. The protein resides in the cytoskeleton. It localises to the microtubule organizing center. Its subcellular location is the centrosome. It is found in the cell projection. The protein localises to the cilium. The protein resides in the centriole. It localises to the spindle pole. Its subcellular location is the flagellum. Functionally, seems to be a major component of sperm tail outer dense fibers (ODF). ODFs are filamentous structures located on the outside of the axoneme in the midpiece and principal piece of the mammalian sperm tail and may help to maintain the passive elastic structures and elastic recoil of the sperm tail. May have a modulating influence on sperm motility. Functions as a general scaffold protein that is specifically localized at the distal/subdistal appendages of mother centrioles. Component of the centrosome matrix required for the localization of PLK1 and NIN to the centrosomes. Required for the formation and/or maintenance of normal CETN1 assembly. The polypeptide is Outer dense fiber protein 2 (ODF2) (Bos taurus (Bovine)).